A 648-amino-acid chain; its full sequence is Phosphomethylpyrimidine synthase (648 aa).

Residues Asn253, Met282, Tyr311, His347, 367 to 369, 408 to 411, and Glu447 contribute to the substrate site; these read SRG and DGLR. Residue His451 participates in Zn(2+) binding. Residue Tyr474 participates in substrate binding. His515 is a binding site for Zn(2+). The [4Fe-4S] cluster site is built by Cys595, Cys598, and Cys603.

It belongs to the ThiC family. Homodimer. Requires [4Fe-4S] cluster as cofactor.

It carries out the reaction 5-amino-1-(5-phospho-beta-D-ribosyl)imidazole + S-adenosyl-L-methionine = 4-amino-2-methyl-5-(phosphooxymethyl)pyrimidine + CO + 5'-deoxyadenosine + formate + L-methionine + 3 H(+). It functions in the pathway cofactor biosynthesis; thiamine diphosphate biosynthesis. Catalyzes the synthesis of the hydroxymethylpyrimidine phosphate (HMP-P) moiety of thiamine from aminoimidazole ribotide (AIR) in a radical S-adenosyl-L-methionine (SAM)-dependent reaction. The chain is Phosphomethylpyrimidine synthase from Burkholderia thailandensis (strain ATCC 700388 / DSM 13276 / CCUG 48851 / CIP 106301 / E264).